Consider the following 284-residue polypeptide: NAD kinase (284 aa).

D60 acts as the Proton acceptor in catalysis. Residues 60-61, 134-135, R145, K162, D164, 175-180, and Q234 each bind NAD(+); these read DG, ND, and TAYSFS.

This sequence belongs to the NAD kinase family. A divalent metal cation is required as a cofactor.

The protein localises to the cytoplasm. It carries out the reaction NAD(+) + ATP = ADP + NADP(+) + H(+). Involved in the regulation of the intracellular balance of NAD and NADP, and is a key enzyme in the biosynthesis of NADP. Catalyzes specifically the phosphorylation on 2'-hydroxyl of the adenosine moiety of NAD to yield NADP. This Clostridium beijerinckii (strain ATCC 51743 / NCIMB 8052) (Clostridium acetobutylicum) protein is NAD kinase.